The following is a 700-amino-acid chain: Suprabasin (700 aa).

Positions methionine 1–alanine 23 are cleaved as a signal peptide. Disordered regions lie at residues glutamine 133–lysine 158, histidine 183–lysine 258, and histidine 283–histidine 391. Residues lysine 488–lysine 546 are a coiled coil. The segment covering glycine 641–asparagine 654 has biased composition (polar residues). A disordered region spans residues glycine 641–glycine 669. Gly residues predominate over residues glutamine 658–glycine 668.

In terms of tissue distribution, detected in epidermis, in suprabasal keratinocytes. Detected in suprabasal layers of embryonic epidermis and in stratified layers of embryonic tongue and palate. Detected in adult stomach.

The protein localises to the secreted. This chain is Suprabasin (Sbsn), found in Mus musculus (Mouse).